A 132-amino-acid chain; its full sequence is Small ribosomal subunit protein uS8 (132 aa).

The protein belongs to the universal ribosomal protein uS8 family. In terms of assembly, part of the 30S ribosomal subunit. Contacts proteins S5 and S12.

One of the primary rRNA binding proteins, it binds directly to 16S rRNA central domain where it helps coordinate assembly of the platform of the 30S subunit. In Staphylococcus epidermidis (strain ATCC 35984 / DSM 28319 / BCRC 17069 / CCUG 31568 / BM 3577 / RP62A), this protein is Small ribosomal subunit protein uS8.